The primary structure comprises 235 residues: Large ribosomal subunit protein uL1 (235 aa).

Belongs to the universal ribosomal protein uL1 family. As to quaternary structure, part of the 50S ribosomal subunit.

Functionally, binds directly to 23S rRNA. The L1 stalk is quite mobile in the ribosome, and is involved in E site tRNA release. Its function is as follows. Protein L1 is also a translational repressor protein, it controls the translation of the L11 operon by binding to its mRNA. This is Large ribosomal subunit protein uL1 from Prochlorococcus marinus (strain MIT 9312).